A 425-amino-acid polypeptide reads, in one-letter code: Glutamyl-tRNA reductase (425 aa).

Residues 49-52, Ser107, 112-114, and Gln118 each bind substrate; these read TCNR and EPQ. The Nucleophile role is filled by Cys50. 187 to 192 is an NADP(+) binding site; that stretch reads GAGETI.

This sequence belongs to the glutamyl-tRNA reductase family. As to quaternary structure, homodimer.

The catalysed reaction is (S)-4-amino-5-oxopentanoate + tRNA(Glu) + NADP(+) = L-glutamyl-tRNA(Glu) + NADPH + H(+). Its pathway is porphyrin-containing compound metabolism; protoporphyrin-IX biosynthesis; 5-aminolevulinate from L-glutamyl-tRNA(Glu): step 1/2. Functionally, catalyzes the NADPH-dependent reduction of glutamyl-tRNA(Glu) to glutamate 1-semialdehyde (GSA). The polypeptide is Glutamyl-tRNA reductase (Pseudomonas putida (strain W619)).